The sequence spans 151 residues: Late embryogenesis abundant protein Lea14-A (151 aa).

It belongs to the LEA type 2 family.

The sequence is that of Late embryogenesis abundant protein Lea14-A (LEA14-A) from Gossypium hirsutum (Upland cotton).